The following is a 210-amino-acid chain: High mobility group protein B2 (210 aa).

Lysine 3 is modified (N6-acetyllysine). Residues 9-79 (PRGKMSSYAF…RYDREMKNYV (71 aa)) constitute a DNA-binding region (HMG box 1). Cysteine sulfonic acid (-SO3H); alternate is present on cysteine 23. Residues cysteine 23 and cysteine 45 are joined by a disulfide bond. Lysine 30 is subject to N6-acetyllysine. A Phosphoserine modification is found at serine 35. Residue lysine 43 is modified to N6-acetyllysine. At cysteine 45 the chain carries Cysteine sulfonic acid (-SO3H); alternate. The segment covering 51 to 76 (TMSAKEKSKFEDLAKSDKARYDREMK) has biased composition (basic and acidic residues). The tract at residues 51–102 (TMSAKEKSKFEDLAKSDKARYDREMKNYVPPKGDKKGKKKDPNAPKRPPSAF) is disordered. Lysine 90 carries the post-translational modification N6-acetyllysine. Positions 95 to 163 (PKRPPSAFFL…KYEKDIAAYR (69 aa)) form a DNA-binding region, HMG box 2. Serine 100 carries the post-translational modification Phosphoserine. Cysteine 106 carries the cysteine sulfonic acid (-SO3H) modification. Residues lysine 114 and lysine 141 each carry the N6-acetyllysine modification. Residues 162-172 (YRAKGKSEVGK) are compositionally biased toward basic and acidic residues. Residues 162 to 210 (YRAKGKSEVGKKGPGRPTGSKKKNEPEDEEEEEEEEDDEDEEEEDEDEE) form a disordered region. Residues 165–180 (KGKSEVGKKGPGRPTG) are required for chemotactic activity. A compositionally biased stretch (acidic residues) spans 187 to 210 (PEDEEEEEEEEDDEDEEEEDEDEE).

This sequence belongs to the HMGB family. As to quaternary structure, interacts with POU2F2, POU2F1 and POU3F1. Component of the RAG complex composed of core components RAG1 and RAG2, and associated component HMGB1 or HMGB2. Component of the SET complex, composed of at least ANP32A, APEX1, HMGB2, NME1, SET and TREX1. Directly interacts with SET. Interacts with LEF1. Post-translationally, reduction/oxidation of cysteine residues Cys-23, Cys-45 and Cys-106 and a possible intramolecular disulfide bond involving Cys-23 and Cys-45 give rise to different redox forms with specific functional activities in various cellular compartments: 1- fully reduced HMGB2 (HMGB2C23hC45hC106h), 2- disulfide HMGB2 (HMGB2C23-C45C106h) and 3- sulfonyl HMGB2 (HMGB2C23soC45soC106so).

Its subcellular location is the nucleus. It is found in the chromosome. It localises to the cytoplasm. The protein localises to the secreted. Functionally, multifunctional protein with various roles in different cellular compartments. May act in a redox sensitive manner. In the nucleus is an abundant chromatin-associated non-histone protein involved in transcription, chromatin remodeling and V(D)J recombination and probably other processes. Binds DNA with a preference to non-canonical DNA structures such as single-stranded DNA. Can bent DNA and enhance DNA flexibility by looping thus providing a mechanism to promote activities on various gene promoters by enhancing transcription factor binding and/or bringing distant regulatory sequences into close proximity. Involved in V(D)J recombination by acting as a cofactor of the RAG complex: acts by stimulating cleavage and RAG protein binding at the 23 bp spacer of conserved recombination signal sequences (RSS). Proposed to be involved in the innate immune response to nucleic acids by acting as a cytoplasmic promiscuous immunogenic DNA/RNA sensor which cooperates with subsequent discriminative sensing by specific pattern recognition receptors. In the extracellular compartment acts as a chemokine. Promotes proliferation and migration of endothelial cells implicating AGER/RAGE. Has antimicrobial activity in gastrointestinal epithelial tissues. Involved in inflammatory response to antigenic stimulus coupled with pro-inflammatory activity. May play a role in germ cell differentiation. Involved in modulation of neurogenesis probably by regulation of neural stem proliferation. Involved in articular cartilage surface maintenance implicating LEF1 and the Wnt/beta-catenin pathway. The polypeptide is High mobility group protein B2 (Hmgb2) (Rattus norvegicus (Rat)).